Consider the following 499-residue polypeptide: Histidine ammonia-lyase (499 aa).

Positions 142-144 form a cross-link, 5-imidazolinone (Ala-Gly); it reads ASG. A 2,3-didehydroalanine (Ser) modification is found at S143.

This sequence belongs to the PAL/histidase family. Post-translationally, contains an active site 4-methylidene-imidazol-5-one (MIO), which is formed autocatalytically by cyclization and dehydration of residues Ala-Ser-Gly.

Its subcellular location is the cytoplasm. It carries out the reaction L-histidine = trans-urocanate + NH4(+). Its pathway is amino-acid degradation; L-histidine degradation into L-glutamate; N-formimidoyl-L-glutamate from L-histidine: step 1/3. The sequence is that of Histidine ammonia-lyase from Staphylococcus saprophyticus subsp. saprophyticus (strain ATCC 15305 / DSM 20229 / NCIMB 8711 / NCTC 7292 / S-41).